A 122-amino-acid polypeptide reads, in one-letter code: Autophagy-related protein 8e (122 aa).

Residue Gly118 is the site of Phosphatidylethanolamine amidated glycine attachment. A propeptide spans 119–122 (removed in mature form); it reads ASSI.

The protein belongs to the ATG8 family. In terms of assembly, interacts with ATG4. Interacts with SH3P2. Interacts with ATG1A and ATG11. Binds to ATG1A and ATG11 on autophagic vesicles. Post-translationally, the C-terminal 4 residues are removed by ATG4 to expose Gly-118 at the C-terminus. This Gly-118 forms then a thioester bond with the 'Cys-558' of ATG7 (E1-like activating enzyme) before being transferred to the 'Cys-258' of ATG3 (the specific E2 conjugating enzyme), in order to be finally amidated with phosphatidylethanolamine. This lipid modification anchors ATG8 to autophagosomes. As to expression, constitutively expressed.

It is found in the cytoplasmic vesicle. The protein localises to the autophagosome membrane. The protein resides in the vacuole membrane. Its subcellular location is the cytoplasm. It localises to the cytoskeleton. In terms of biological role, ubiquitin-like modifier involved in autophagosomes formation. May mediate the delivery of the autophagosomes to the vacuole via the microtubule cytoskeleton. This is Autophagy-related protein 8e (ATG8E) from Arabidopsis thaliana (Mouse-ear cress).